Consider the following 208-residue polypeptide: Exosome complex component CSL4 homolog (208 aa).

In terms of assembly, component of the RNA exosome complex. In terms of tissue distribution, ubiquitously expressed.

The protein resides in the nucleus. It is found in the nucleolus. It localises to the nucleoplasm. Its function is as follows. Non-catalytic component of the RNA exosome complex which has 3'-&gt;5' exoribonuclease activity and participates in a multitude of cellular RNA processing and degradation events. Involved in regulation of antisense ribosomal siRNA production. Involved in response to cold-warm shock. The protein is Exosome complex component CSL4 homolog of Caenorhabditis elegans.